The chain runs to 194 residues: Probable GTP-binding protein EngB (194 aa).

One can recognise an EngB-type G domain in the interval 22–194; that stretch reads GKPEIALVGR…SVWEWITAHM (173 aa). GTP contacts are provided by residues 30–37, 57–61, 75–78, 142–145, and 175–177; these read GRSNVGKS, GKTQT, DVPG, TKSD, and FSS. The Mg(2+) site is built by Ser-37 and Thr-59.

This sequence belongs to the TRAFAC class TrmE-Era-EngA-EngB-Septin-like GTPase superfamily. EngB GTPase family. Mg(2+) is required as a cofactor.

In terms of biological role, necessary for normal cell division and for the maintenance of normal septation. This is Probable GTP-binding protein EngB from Leuconostoc citreum (strain KM20).